The chain runs to 478 residues: Ribosomal RNA small subunit methyltransferase F (478 aa).

Residues 123-129 (AAAPGSK), glutamate 147, aspartate 174, and aspartate 192 each bind S-adenosyl-L-methionine. The active-site Nucleophile is cysteine 245.

It belongs to the class I-like SAM-binding methyltransferase superfamily. RsmB/NOP family.

It localises to the cytoplasm. The enzyme catalyses cytidine(1407) in 16S rRNA + S-adenosyl-L-methionine = 5-methylcytidine(1407) in 16S rRNA + S-adenosyl-L-homocysteine + H(+). Its function is as follows. Specifically methylates the cytosine at position 1407 (m5C1407) of 16S rRNA. This is Ribosomal RNA small subunit methyltransferase F from Vibrio parahaemolyticus serotype O3:K6 (strain RIMD 2210633).